The chain runs to 99 residues: Transmembrane protein 14A (99 aa).

Helical transmembrane passes span 1 to 21, 24 to 44, and 79 to 99; these read MDLI…LGYK, GGVP…YGAY, and PAGL…LLLL.

It belongs to the TMEM14 family.

It localises to the mitochondrion membrane. The protein localises to the endoplasmic reticulum membrane. In terms of biological role, inhibits apoptosis via negative regulation of the mitochondrial outer membrane permeabilization involved in apoptotic signaling pathway. The sequence is that of Transmembrane protein 14A (TMEM14A) from Sus scrofa (Pig).